Here is a 434-residue protein sequence, read N- to C-terminus: Ribosomal protein uS12 methylthiotransferase RimO (434 aa).

Residues 6–122 (SKLYLLTLGC…IIAELGGHYK (117 aa)) form the MTTase N-terminal domain. [4Fe-4S] cluster-binding residues include Cys15, Cys51, Cys85, Cys146, Cys150, and Cys153. Residues 132–361 (LTPPYFSYLK…MAAQEEIAYA (230 aa)) enclose the Radical SAM core domain. The TRAM domain maps to 364–434 (QALVGSFMPV…AFDLFGSLVL (71 aa)).

This sequence belongs to the methylthiotransferase family. RimO subfamily. Requires [4Fe-4S] cluster as cofactor.

The protein resides in the cytoplasm. It catalyses the reaction L-aspartate(89)-[ribosomal protein uS12]-hydrogen + (sulfur carrier)-SH + AH2 + 2 S-adenosyl-L-methionine = 3-methylsulfanyl-L-aspartate(89)-[ribosomal protein uS12]-hydrogen + (sulfur carrier)-H + 5'-deoxyadenosine + L-methionine + A + S-adenosyl-L-homocysteine + 2 H(+). Catalyzes the methylthiolation of an aspartic acid residue of ribosomal protein uS12. This chain is Ribosomal protein uS12 methylthiotransferase RimO, found in Chloroherpeton thalassium (strain ATCC 35110 / GB-78).